The chain runs to 306 residues: Methionyl-tRNA formyltransferase (306 aa).

108 to 111 (SLLP) contacts (6S)-5,6,7,8-tetrahydrofolate.

It belongs to the Fmt family.

The enzyme catalyses L-methionyl-tRNA(fMet) + (6R)-10-formyltetrahydrofolate = N-formyl-L-methionyl-tRNA(fMet) + (6S)-5,6,7,8-tetrahydrofolate + H(+). In terms of biological role, attaches a formyl group to the free amino group of methionyl-tRNA(fMet). The formyl group appears to play a dual role in the initiator identity of N-formylmethionyl-tRNA by promoting its recognition by IF2 and preventing the misappropriation of this tRNA by the elongation apparatus. In Arthrobacter sp. (strain FB24), this protein is Methionyl-tRNA formyltransferase.